A 389-amino-acid chain; its full sequence is NAD-dependent protein deacetylase sirtuin-2 (389 aa).

The interval 1–34 (MAEPDPSDPLETQAGKVQEAQDSDSDTEGGATGG) is disordered. A2 carries the N-acetylalanine modification. S23 and S25 each carry phosphoserine. T27 is subject to Phosphothreonine. The short motif at 41–51 (LRNLFTQTLGL) is the Nuclear export signal element. Phosphoserine is present on S53. Positions 57-338 (RLLDELTLEG…LALADLLGWK (282 aa)) constitute a Deacetylase sirtuin-type domain. NAD(+) is bound by residues 85-89 (AGIST) and 95-97 (DFR). A Phosphoserine modification is found at S100. NAD(+) is bound at residue 167 to 170 (QNID). The active-site Proton acceptor is H187. C195, C200, C221, and C224 together coordinate Zn(2+). Residues 262-263 (TS), 286-288 (NKE), and C324 contribute to the NAD(+) site. The interval 350-389 (ANIDAQSGSQAPNPSTTISPGKSPPPAKEAARTKEKEEQQ) is disordered. Over residues 353 to 369 (DAQSGSQAPNPSTTISP) the composition is skewed to polar residues. Phosphoserine occurs at positions 368 and 372. Over residues 378-389 (EAARTKEKEEQQ) the composition is skewed to basic and acidic residues.

The protein belongs to the sirtuin family. Class I subfamily. As to quaternary structure, interacts with CDC20, FOXO3 and FZR1. Associates with microtubule in primary cortical mature neurons. Homotrimer. Interacts (via both phosphorylated, unphosphorylated, active or inactive forms) with HDAC6; the interaction is necessary for the complex to interact with alpha-tubulin, suggesting that these proteins belong to a large complex that deacetylates the cytoskeleton. Interacts with FOXO1; the interaction is disrupted upon serum-starvation or oxidative stress, leading to increased level of acetylated FOXO1 and induction of autophagy. Interacts with RELA; the interaction occurs in the cytoplasm and is increased in a TNF-alpha-dependent manner. Interacts with HOXA10; the interaction is direct. Interacts with YWHAB and YWHAG; the interactions occur in a AKT-dependent manner and increase SIRT2-dependent TP53 deacetylation. Interacts with MAPK1/ERK2 and MAPK3/ERK1; the interactions increase SIRT2 stability and deacetylation activity. Interacts (phosphorylated form) with KMT5A isoform 2; the interaction is direct, stimulates KMT5A-mediated methyltransferase activity on histone at 'Lys-20' (H4K20me1) and is increased in a H(2)O(2)-induced oxidative stress-dependent manner. Interacts with G6PD; the interaction is enhanced by H(2)O(2) treatment. Interacts with a G1/S-specific cyclin E-CDK2 complex. Interacts with AURKA, CDK5R1 (p35 form) and CDK5 and HIF1A. Interacts with the tRNA ligase SARS1; recruited to the VEGFA promoter via interaction with SARS1. Isoform 2 and isoform 4 associate with microtubules in primary cortical mature neurons. Interacts with BEX4; negatively regulates alpha-tubulin deacetylation by SIRT2. Zn(2+) serves as cofactor. Phosphorylated at phosphoserine and phosphothreonine. Phosphorylated at Ser-368 by a mitotic kinase CDK1/cyclin B at the G2/M transition; phosphorylation regulates the delay in cell-cycle progression. Phosphorylated at Ser-368 by a mitotic kinase G1/S-specific cyclin E/Cdk2 complex; phosphorylation inactivates SIRT2-mediated alpha-tubulin deacetylation and thereby negatively regulates cell adhesion, cell migration and neurite outgrowth during neuronal differentiation. Phosphorylated by cyclin A/Cdk2 and p35-Cdk5 complexes and to a lesser extent by the cyclin D3/Cdk4 and cyclin B/Cdk1, in vitro. Dephosphorylated at Ser-368 by CDC14A and CDC14B around early anaphase. In terms of processing, acetylated by EP300; acetylation leads both to the decreased of SIRT2-mediated alpha-tubulin deacetylase activity and SIRT2-mediated down-regulation of TP53 transcriptional activity. Post-translationally, ubiquitinated. In terms of tissue distribution, isoform 1 is weakly expressed in the cortex at postnatal(P) days P1, P3 and P7, and increases progressively between P17 and older adult cortex. Isoform 1 is also expressed in heart, liver and skeletal muscle, weakly expressed in the striatum and spinal cord. Isoform 2 is not expressed in the cortex at P1, P3 and P7, and increases strongly and progressively between P17 and older adult cortex. Isoform 2 is also expressed in the heart, liver, striatum and spinal cord. Isoform 4 is weakly expressed in older adult cortex and spinal cords. Expressed in the cortex. Expressed in postnatal sciatic nerves during myelination and during remyelination after nerve injury. Expressed in neurons, oligodendrocytes, Schwann cells, Purkinje cells and in astrocytes of white matter. Strongly expressed in preadipocytes compared with differentiated adipocytes. Expressed in cerebellar granule cells. Expressed in the inner ear: in the cochlea, expressed in types I and V fibrocytes in the spiral ligament (SL) and slightly in stria vascularis (SV); in the organ of Corti, expressed in some supporting cells; in the crista ampullaris, expressed in spiral ganglion cells; also expressed in the endolymphatic sac (ES) epithelial cells (at protein level). Expressed in the brain, spinal cord, optic nerve and hippocampus. Strongly expressed in 6-8 week-old ovulated meiosis II oocytes and weakly expressed in 45-58 week-old ovulated meiosis II oocytes. Expressed in the cochlea, vestibule and acoustic nerve of the inner ear.

The protein resides in the nucleus. It localises to the cytoplasm. The protein localises to the perinuclear region. Its subcellular location is the perikaryon. It is found in the cytoskeleton. The protein resides in the cell projection. It localises to the growth cone. The protein localises to the myelin membrane. Its subcellular location is the microtubule organizing center. It is found in the centrosome. The protein resides in the spindle. It localises to the chromosome. The protein localises to the midbody. Its subcellular location is the centriole. The enzyme catalyses N(6)-acetyl-L-lysyl-[protein] + NAD(+) + H2O = 2''-O-acetyl-ADP-D-ribose + nicotinamide + L-lysyl-[protein]. It catalyses the reaction N(6)-tetradecanoyl-L-lysyl-[protein] + NAD(+) + H2O = 2''-O-tetradecanoyl-ADP-D-ribose + nicotinamide + L-lysyl-[protein]. It carries out the reaction N(6)-hexadecanoyl-L-lysyl-[protein] + NAD(+) + H2O = 2''-O-hexadecanoyl-ADP-D-ribose + nicotinamide + L-lysyl-[protein]. With respect to regulation, inhibited by Sirtinol, A3 and M15 small molecules. Inhibited by nicotinamide. Inhibited by a macrocyclic peptide inhibitor S2iL5. Inhibited by EP300-induced acetylation. Functionally, NAD-dependent protein deacetylase, which deacetylates internal lysines on histone and alpha-tubulin as well as many other proteins such as key transcription factors. Participates in the modulation of multiple and diverse biological processes such as cell cycle control, genomic integrity, microtubule dynamics, cell differentiation, metabolic networks, and autophagy. Plays a major role in the control of cell cycle progression and genomic stability. Functions in the antephase checkpoint preventing precocious mitotic entry in response to microtubule stress agents, and hence allowing proper inheritance of chromosomes. Positively regulates the anaphase promoting complex/cyclosome (APC/C) ubiquitin ligase complex activity by deacetylating CDC20 and FZR1, then allowing progression through mitosis. Associates both with chromatin at transcriptional start sites (TSSs) and enhancers of active genes. Plays a role in cell cycle and chromatin compaction through epigenetic modulation of the regulation of histone H4 'Lys-20' methylation (H4K20me1) during early mitosis. Specifically deacetylates histone H4 at 'Lys-16' (H4K16ac) between the G2/M transition and metaphase enabling H4K20me1 deposition by KMT5A leading to ulterior levels of H4K20me2 and H4K20me3 deposition throughout cell cycle, and mitotic S-phase progression. Deacetylates KMT5A modulating KMT5A chromatin localization during the mitotic stress response. Also deacetylates histone H3 at 'Lys-57' (H3K56ac) during the mitotic G2/M transition. During oocyte meiosis progression, may deacetylate histone H4 at 'Lys-16' (H4K16ac) and alpha-tubulin, regulating spindle assembly and chromosome alignment by influencing microtubule dynamics and kinetochore function. Deacetylates histone H4 at 'Lys-16' (H4K16ac) at the VEGFA promoter and thereby contributes to regulate expression of VEGFA, a key regulator of angiogenesis. Deacetylates alpha-tubulin at 'Lys-40' and hence controls neuronal motility, oligodendroglial cell arbor projection processes and proliferation of non-neuronal cells. Phosphorylation at Ser-368 by a G1/S-specific cyclin E-CDK2 complex inactivates SIRT2-mediated alpha-tubulin deacetylation, negatively regulating cell adhesion, cell migration and neurite outgrowth during neuronal differentiation. Deacetylates PARD3 and participates in the regulation of Schwann cell peripheral myelination formation during early postnatal development and during postinjury remyelination. Involved in several cellular metabolic pathways. Plays a role in the regulation of blood glucose homeostasis by deacetylating and stabilizing phosphoenolpyruvate carboxykinase PCK1 activity in response to low nutrient availability. Acts as a key regulator in the pentose phosphate pathway (PPP) by deacetylating and activating the glucose-6-phosphate G6PD enzyme, and therefore, stimulates the production of cytosolic NADPH to counteract oxidative damage. Maintains energy homeostasis in response to nutrient deprivation as well as energy expenditure by inhibiting adipogenesis and promoting lipolysis. Attenuates adipocyte differentiation by deacetylating and promoting FOXO1 interaction to PPARG and subsequent repression of PPARG-dependent transcriptional activity. Plays a role in the regulation of lysosome-mediated degradation of protein aggregates by autophagy in neuronal cells. Deacetylates FOXO1 in response to oxidative stress or serum deprivation, thereby negatively regulating FOXO1-mediated autophagy. Deacetylates a broad range of transcription factors and co-regulators regulating target gene expression. Deacetylates transcriptional factor FOXO3 stimulating the ubiquitin ligase SCF(SKP2)-mediated FOXO3 ubiquitination and degradation. Deacetylates HIF1A and therefore promotes HIF1A degradation and inhibition of HIF1A transcriptional activity in tumor cells in response to hypoxia. Deacetylates RELA in the cytoplasm inhibiting NF-kappaB-dependent transcription activation upon TNF-alpha stimulation. Inhibits transcriptional activation by deacetylating p53/TP53 and EP300. Also deacetylates EIF5A. Functions as a negative regulator on oxidative stress-tolerance in response to anoxia-reoxygenation conditions. Plays a role as tumor suppressor. In addition to protein deacetylase activity, also has activity toward long-chain fatty acyl groups and mediates protein-lysine demyristoylation and depalmitoylation of target proteins, such as ARF6 and KRAS, thereby regulating their association with membranes. Its function is as follows. Deacetylates alpha-tubulin. This chain is NAD-dependent protein deacetylase sirtuin-2 (Sirt2), found in Mus musculus (Mouse).